Reading from the N-terminus, the 189-residue chain is MRRNIRVTLGAATIVAALGLSGCSHPEFKRSSPPAPSLPPVTSSPLEAAPITPLPAPEALIDVLSRLADPAVPGTNKVQLIEGATPENAAALDRFTTALRDGSYLPMTFAANDIAWSDNKPSDVMATVVVTTAHPDNREFTFPMEFVSFKGGWQLSRQTAEMLLAMGNSPDSTPSATSPAPAPSPTPPG.

A signal peptide spans 1–22 (MRRNIRVTLGAATIVAALGLSG). C23 carries the N-palmitoyl cysteine lipid modification. Residue C23 is the site of S-diacylglycerol cysteine attachment. 2 disordered regions span residues 26–49 (PEFK…LEAA) and 166–189 (MGNS…TPPG). Over residues 169 to 179 (SPDSTPSATSP) the composition is skewed to low complexity. The segment covering 180-189 (APAPSPTPPG) has biased composition (pro residues).

The protein belongs to the MTB12 family.

It localises to the cell membrane. The protein is Putative lipoprotein LppK (lppK) of Mycobacterium tuberculosis (strain CDC 1551 / Oshkosh).